Reading from the N-terminus, the 112-residue chain is Large ribosomal subunit protein uL22 (112 aa).

This sequence belongs to the universal ribosomal protein uL22 family. In terms of assembly, part of the 50S ribosomal subunit.

Functionally, this protein binds specifically to 23S rRNA; its binding is stimulated by other ribosomal proteins, e.g. L4, L17, and L20. It is important during the early stages of 50S assembly. It makes multiple contacts with different domains of the 23S rRNA in the assembled 50S subunit and ribosome. The globular domain of the protein is located near the polypeptide exit tunnel on the outside of the subunit, while an extended beta-hairpin is found that lines the wall of the exit tunnel in the center of the 70S ribosome. The protein is Large ribosomal subunit protein uL22 of Anaplasma marginale (strain Florida).